The following is a 1262-amino-acid chain: Cytoplasmic FMR1-interacting protein homolog (1262 aa).

Residues 519-550 (LNRMTDVKGKKKSSAPKGDSANSSSSDIRIPR) form a disordered region.

Belongs to the CYFIP family. Interacts with gex-3.

The protein resides in the cytoplasm. Required for initial steps of body morphogenesis. May play a role in egg laying and yolk protein clatherin-mediated endocytosis by oocytes during oogenesis. Plays a role in the formation of muscle connections, also called muscle arm extensions, between the body wall and the motor axons in the dorsal and ventral cord. This Caenorhabditis elegans protein is Cytoplasmic FMR1-interacting protein homolog.